The primary structure comprises 645 residues: UPF0313 protein CLB_0243 (645 aa).

The Radical SAM core domain maps to 295–566 (AIKEVKFSIT…RMQRALLQFS (272 aa)). Cys309, Cys313, and Cys316 together coordinate [4Fe-4S] cluster. Residues 598-645 (NKPYKKSHKKNNAKNNNNHYNKNNNYNKNKDISKKNKKNSLSKHKKRK) are disordered. Positions 600–609 (PYKKSHKKNN) are enriched in basic residues. Low complexity predominate over residues 610–624 (AKNNNNHYNKNNNYN). Basic residues predominate over residues 632–645 (KNKKNSLSKHKKRK).

It belongs to the UPF0313 family. [4Fe-4S] cluster serves as cofactor.

This chain is UPF0313 protein CLB_0243, found in Clostridium botulinum (strain ATCC 19397 / Type A).